An 86-amino-acid polypeptide reads, in one-letter code: MSLLDYFKTKKEPSTAVTAKERLQIIVAHQRGERGAPDYFPQMKQEIIEVIRKYVQVGPDQVSVQLEQTDDNFSVLELNVTLPEQS.

Belongs to the MinE family.

Its function is as follows. Prevents the cell division inhibition by proteins MinC and MinD at internal division sites while permitting inhibition at polar sites. This ensures cell division at the proper site by restricting the formation of a division septum at the midpoint of the long axis of the cell. The protein is Cell division topological specificity factor of Shewanella halifaxensis (strain HAW-EB4).